The chain runs to 553 residues: Methionine--tRNA ligase (553 aa).

Residues 12–22 carry the 'HIGH' region motif; sequence PYANSQLHLGH. Zn(2+)-binding residues include cysteine 144, cysteine 147, cysteine 157, and cysteine 160. A 'KMSKS' region motif is present at residues 332–336; it reads KFSKS. Lysine 335 contributes to the ATP binding site.

Belongs to the class-I aminoacyl-tRNA synthetase family. MetG type 1 subfamily. In terms of assembly, monomer. It depends on Zn(2+) as a cofactor.

Its subcellular location is the cytoplasm. The enzyme catalyses tRNA(Met) + L-methionine + ATP = L-methionyl-tRNA(Met) + AMP + diphosphate. Is required not only for elongation of protein synthesis but also for the initiation of all mRNA translation through initiator tRNA(fMet) aminoacylation. This chain is Methionine--tRNA ligase, found in Dehalococcoides mccartyi (strain ATCC BAA-2100 / JCM 16839 / KCTC 5957 / BAV1).